The sequence spans 394 residues: Elongation factor Tu (394 aa).

The 195-residue stretch at 10–204 (KPHINIGTIG…AVDDNIPTPE (195 aa)) folds into the tr-type G domain. The interval 19–26 (GHVDHGKT) is G1. A GTP-binding site is contributed by 19–26 (GHVDHGKT). Thr-26 is a Mg(2+) binding site. The G2 stretch occupies residues 60-64 (GITIN). Positions 81–84 (DCPG) are G3. Residues 81-85 (DCPGH) and 136-139 (NKID) contribute to the GTP site. A G4 region spans residues 136 to 139 (NKID). Positions 174–176 (SAL) are G5.

The protein belongs to the TRAFAC class translation factor GTPase superfamily. Classic translation factor GTPase family. EF-Tu/EF-1A subfamily. Monomer.

The protein localises to the cytoplasm. The catalysed reaction is GTP + H2O = GDP + phosphate + H(+). In terms of biological role, GTP hydrolase that promotes the GTP-dependent binding of aminoacyl-tRNA to the A-site of ribosomes during protein biosynthesis. This is Elongation factor Tu from Chlamydia caviae (strain ATCC VR-813 / DSM 19441 / 03DC25 / GPIC) (Chlamydophila caviae).